Reading from the N-terminus, the 26-residue chain is Hemocyanin subunit B (26 aa).

Belongs to the tyrosinase family. Hemocyanin subfamily. Hemolymph.

The protein resides in the secreted. It is found in the extracellular space. Hemocyanins are copper-containing oxygen carriers occurring freely dissolved in the hemolymph of many mollusks and arthropods. The polypeptide is Hemocyanin subunit B (Carcinus maenas (Common shore crab)).